We begin with the raw amino-acid sequence, 516 residues long: Lysine--tRNA ligase (516 aa).

Positions 1–23 (MTEPNRAQAAPASPTAELPAADE) are disordered. Mg(2+) is bound by residues Glu426 and Glu433.

The protein belongs to the class-II aminoacyl-tRNA synthetase family. Homodimer. Requires Mg(2+) as cofactor.

Its subcellular location is the cytoplasm. It catalyses the reaction tRNA(Lys) + L-lysine + ATP = L-lysyl-tRNA(Lys) + AMP + diphosphate. The sequence is that of Lysine--tRNA ligase from Cupriavidus pinatubonensis (strain JMP 134 / LMG 1197) (Cupriavidus necator (strain JMP 134)).